The sequence spans 307 residues: tRNA dimethylallyltransferase (307 aa).

5-12 contributes to the ATP binding site; it reads GPTGTGKS. Residue 7–12 coordinates substrate; it reads TGTGKS.

This sequence belongs to the IPP transferase family. In terms of assembly, monomer. The cofactor is Mg(2+).

It carries out the reaction adenosine(37) in tRNA + dimethylallyl diphosphate = N(6)-dimethylallyladenosine(37) in tRNA + diphosphate. Functionally, catalyzes the transfer of a dimethylallyl group onto the adenine at position 37 in tRNAs that read codons beginning with uridine, leading to the formation of N6-(dimethylallyl)adenosine (i(6)A). This Mycobacterium avium (strain 104) protein is tRNA dimethylallyltransferase.